A 563-amino-acid chain; its full sequence is MSIRNDNASGGYMQPDQSSNASMHKRDLRVEEEIKPLDDMDSKGAVAADGEVHLRKSFSLWSILGVGFGLTNSWFGISTSMVAGISSGGPMMIVYGIIIVALISICIGTSLGELSSAYPHAGGQFWWSLKLAPPKYKRFAAYMCGSFAYAGSVFTSASTTLSVATEVVGMYALTHPEFIPKRWHIFVCFELLHLFLMFFNCYGKSLPIISSSSLYISLLSFFTITITVLACSHGKFNDAKFVFATFNNETGWKNGGIAFIVGLINPAWSFSCLDCATHMAFEVEKPERVIPIAIMGTVAIGFVTSFCYVIAMFFSIQDLDAVLSSTTGAPILDIYNQALGNKSGAIFLGCLILFTSFGCVIACHTWQARLCWSFARDNGLPLSRLWSQVNPHTGVPLNAHLMSCAWITLIGLLYLASSTAFQSLITGCIAFLLLSYIIPVICLLAKKRNIAHGPFWLGKFGFFSNIVLLGWTVFSVVFFSFPPVLPVTKDNMNYVCVVIVGYTAYSILYWKYKGKKEFHALEESENEQAEYSNNFDTIEDSREFSVAASDVELENEHVPWGKK.

The tract at residues 1–25 (MSIRNDNASGGYMQPDQSSNASMHK) is disordered. Over 1–57 (MSIRNDNASGGYMQPDQSSNASMHKRDLRVEEEIKPLDDMDSKGAVAADGEVHLRKS) the chain is Extracellular. N-linked (GlcNAc...) asparagine glycans are attached at residues Asn7 and Asn20. A phosphoserine mark is found at Ser22 and Ser42. Residues 58-78 (FSLWSILGVGFGLTNSWFGIS) traverse the membrane as a helical segment. The Cytoplasmic portion of the chain corresponds to 79-87 (TSMVAGISS). A helical transmembrane segment spans residues 88 to 108 (GGPMMIVYGIIIVALISICIG). The Extracellular segment spans residues 109-182 (TSLGELSSAY…LTHPEFIPKR (74 aa)). The chain crosses the membrane as a helical span at residues 183–203 (WHIFVCFELLHLFLMFFNCYG). Topologically, residues 204-205 (KS) are cytoplasmic. A helical membrane pass occupies residues 206 to 226 (LPIISSSSLYISLLSFFTITI). The Extracellular segment spans residues 227-255 (TVLACSHGKFNDAKFVFATFNNETGWKNG). N-linked (GlcNAc...) asparagine glycosylation is present at Asn248. Residues 256–276 (GIAFIVGLINPAWSFSCLDCA) form a helical membrane-spanning segment. At 277–293 (THMAFEVEKPERVIPIA) the chain is on the cytoplasmic side. The helical transmembrane segment at 294–314 (IMGTVAIGFVTSFCYVIAMFF) threads the bilayer. The Extracellular segment spans residues 315–342 (SIQDLDAVLSSTTGAPILDIYNQALGNK). An N-linked (GlcNAc...) asparagine glycan is attached at Asn341. The helical transmembrane segment at 343-363 (SGAIFLGCLILFTSFGCVIAC) threads the bilayer. Residues 364–398 (HTWQARLCWSFARDNGLPLSRLWSQVNPHTGVPLN) are Cytoplasmic-facing. Residues 399–417 (AHLMSCAWITLIGLLYLAS) form a helical membrane-spanning segment. Residues 418–426 (STAFQSLIT) are Extracellular-facing. A helical membrane pass occupies residues 427 to 445 (GCIAFLLLSYIIPVICLLA). Residues 446–465 (KKRNIAHGPFWLGKFGFFSN) are Cytoplasmic-facing. A helical membrane pass occupies residues 466–486 (IVLLGWTVFSVVFFSFPPVLP). The Extracellular portion of the chain corresponds to 487–491 (VTKDN). Residues 492-512 (MNYVCVVIVGYTAYSILYWKY) traverse the membrane as a helical segment. The Cytoplasmic segment spans residues 513–563 (KGKKEFHALEESENEQAEYSNNFDTIEDSREFSVAASDVELENEHVPWGKK).

Belongs to the amino acid-polyamine-organocation (APC) superfamily. Amino acid/choline transporter (ACT) (TC 2.A.3.4) family.

It is found in the membrane. The catalysed reaction is choline(out) = choline(in). It catalyses the reaction ethanolamine(in) = ethanolamine(out). In terms of biological role, sole choline transporter in yeast. Also transports ethanolamine. The protein is Choline transporter (HNM1) of Saccharomyces cerevisiae (strain ATCC 204508 / S288c) (Baker's yeast).